The following is a 366-amino-acid chain: Flagellar P-ring protein (366 aa).

The first 24 residues, 1-24 (MWPLLLAVALSTLLPLAMPGSAGA), serve as a signal peptide directing secretion.

Belongs to the FlgI family. As to quaternary structure, the basal body constitutes a major portion of the flagellar organelle and consists of four rings (L,P,S, and M) mounted on a central rod.

The protein resides in the periplasm. Its subcellular location is the bacterial flagellum basal body. Its function is as follows. Assembles around the rod to form the L-ring and probably protects the motor/basal body from shearing forces during rotation. The protein is Flagellar P-ring protein of Nitratidesulfovibrio vulgaris (strain ATCC 29579 / DSM 644 / CCUG 34227 / NCIMB 8303 / VKM B-1760 / Hildenborough) (Desulfovibrio vulgaris).